We begin with the raw amino-acid sequence, 259 residues long: MKITLNSVSFRYNGDYVLKDVNAEFETGKIYVVVGKNGSGKTTLLKILAGLLEAEGEIFLDGSPADPFLLRKNVGYVFQNPSSQIIGATVEEDVAFSLEIMGLDESEMRKRIKKVLELVGLSGLEKEDPLNLSGGQKQRLAIASMLARDTRFLALDEPVSMLDPPSQREIFQVLESLKNEGKGIILVTHELEYLDDMDFILHISNGTIDFCGSWEEFVEREFDDVEIPFKWKLWKKCGKINLWEDRYENSGNQRRRDTV.

Positions 3–230 constitute an ABC transporter domain; that stretch reads ITLNSVSFRY…EFDDVEIPFK (228 aa). 38–43 contacts ATP; sequence GSGKTT. Glu157 serves as the catalytic Proton acceptor.

This sequence belongs to the ABC transporter superfamily. Energy-coupling factor EcfA family. In terms of assembly, forms a heterodimer with EcfA2. Forms a stable energy-coupling factor (ECF) transporter complex composed of 2 membrane-embedded substrate-binding proteins (S component, RibU, BioY), 2 ATP-binding proteins (A component) and 2 transmembrane proteins (T component) upon coexpression in E.coli. Stable subcomplexes with both A plus T components can also be isolated. This complex interacts with at least 2 substrate-specific components, BioY and RibU.

The protein resides in the cell inner membrane. ATP-binding (A) component of a common energy-coupling factor (ECF) ABC-transporter complex. Unlike classic ABC transporters this ECF transporter provides the energy necessary to transport a number of different substrates. Expression of the complex plus RibU in E.coli allows riboflavin uptake; uptake does not occur in the absence of RibU or the EcfA1A2T complex. This Thermotoga maritima (strain ATCC 43589 / DSM 3109 / JCM 10099 / NBRC 100826 / MSB8) protein is Energy-coupling factor transporter ATP-binding protein EcfA1.